The chain runs to 503 residues: ATP synthase subunit alpha (503 aa).

Residue 170 to 177 (GDRATGKT) coordinates ATP.

Belongs to the ATPase alpha/beta chains family. As to quaternary structure, F-type ATPases have 2 components, CF(1) - the catalytic core - and CF(0) - the membrane proton channel. CF(1) has five subunits: alpha(3), beta(3), gamma(1), delta(1), epsilon(1). CF(0) has three main subunits: a(1), b(2) and c(9-12). The alpha and beta chains form an alternating ring which encloses part of the gamma chain. CF(1) is attached to CF(0) by a central stalk formed by the gamma and epsilon chains, while a peripheral stalk is formed by the delta and b chains.

The protein resides in the cell inner membrane. The enzyme catalyses ATP + H2O + 4 H(+)(in) = ADP + phosphate + 5 H(+)(out). In terms of biological role, produces ATP from ADP in the presence of a proton gradient across the membrane. The alpha chain is a regulatory subunit. The protein is ATP synthase subunit alpha of Aquifex aeolicus (strain VF5).